The chain runs to 181 residues: Cyclic AMP-dependent transcription factor ATF-3 (181 aa).

Residues 73-97 (EMSVTKSEAAPEEDERKRRRRERNK) are disordered. Lys-78 is covalently cross-linked (Glycyl lysine isopeptide (Lys-Gly) (interchain with G-Cter in SUMO2)). Residues 86–149 (DERKRRRRER…QHLIYMLNLH (64 aa)) enclose the bZIP domain. Residues 88–110 (RKRRRRERNKIAAAKCRNKKKEK) form a basic motif region. The leucine-zipper stretch occupies residues 114–142 (LQKESEKLESVNAELKAQIEELKNEKQHL). Thr-162 bears the Phosphothreonine mark. Residue Lys-175 forms a Glycyl lysine isopeptide (Lys-Gly) (interchain with G-Cter in SUMO2) linkage.

This sequence belongs to the bZIP family. ATF subfamily. Binds DNA as a homodimer or a heterodimer. Interacts with KAT5; promoting KAT5 autoacetylation and KAT5 deubiquitination by USP7.

It localises to the nucleus. In terms of biological role, this protein binds the cAMP response element (CRE) (consensus: 5'-GTGACGT[AC][AG]-3'), a sequence present in many viral and cellular promoters. Represses transcription from promoters with ATF sites. It may repress transcription by stabilizing the binding of inhibitory cofactors at the promoter. The sequence is that of Cyclic AMP-dependent transcription factor ATF-3 from Mus musculus (Mouse).